We begin with the raw amino-acid sequence, 317 residues long: Flagellar hook-associated protein 3 (317 aa).

Belongs to the bacterial flagellin family.

It is found in the secreted. Its subcellular location is the bacterial flagellum. The sequence is that of Flagellar hook-associated protein 3 (flgL) from Escherichia coli (strain K12).